A 370-amino-acid chain; its full sequence is Phospho-2-dehydro-3-deoxyheptonate aldolase, phenylalanine-inhibited (370 aa).

This sequence belongs to the class-I DAHP synthase family.

The enzyme catalyses D-erythrose 4-phosphate + phosphoenolpyruvate + H2O = 7-phospho-2-dehydro-3-deoxy-D-arabino-heptonate + phosphate. Its pathway is metabolic intermediate biosynthesis; chorismate biosynthesis; chorismate from D-erythrose 4-phosphate and phosphoenolpyruvate: step 1/7. Inhibited by phenyalanine. In terms of biological role, stereospecific condensation of phosphoenolpyruvate (PEP) and D-erythrose-4-phosphate (E4P) giving rise to 3-deoxy-D-arabino-heptulosonate-7-phosphate (DAHP). This Saccharomyces cerevisiae (strain ATCC 204508 / S288c) (Baker's yeast) protein is Phospho-2-dehydro-3-deoxyheptonate aldolase, phenylalanine-inhibited (ARO3).